A 100-amino-acid polypeptide reads, in one-letter code: Integration host factor subunit alpha (100 aa).

This sequence belongs to the bacterial histone-like protein family. Heterodimer of an alpha and a beta chain.

Functionally, this protein is one of the two subunits of integration host factor, a specific DNA-binding protein that functions in genetic recombination as well as in transcriptional and translational control. This Erythrobacter litoralis (strain HTCC2594) protein is Integration host factor subunit alpha.